A 224-amino-acid polypeptide reads, in one-letter code: MQLTLNLSGSAGMQLLLLVSSLLLWENVSSKPTAMVPTEDLYTRLAELLHNTFILAADVYREFDLDFFDKTWITDRTLPLCHTASIHTPENREEVHETKTEDLLKAMINVSISWKEPLKHLVSALTALPGASESMGKKAADIKGRNLVILEGLQTIYNRSQANIEENENFDYPAWSGLEELQSPNEDTHLFAVYNLCRCIKRDIHKIDSYIKVLRCRVVFQNEC.

Residues 1 to 29 form the signal peptide; the sequence is MQLTLNLSGSAGMQLLLLVSSLLLWENVS. Cystine bridges form between cysteine 81-cysteine 199 and cysteine 216-cysteine 224. N-linked (GlcNAc...) asparagine glycans are attached at residues asparagine 109 and asparagine 158.

The protein belongs to the somatotropin/prolactin family.

It is found in the secreted. The sequence is that of Prolactin-3D1 (Prl3d1) from Mus musculus (Mouse).